The sequence spans 716 residues: ATP-dependent DNA helicase DinG (716 aa).

An HD1 domain N-terminus region spans residues 1 to 114 (MALTAALKAQ…PDLKFTAAFG (114 aa)). Residues 17 to 294 (ALQEQIPDFI…TCMEQFRPKT (278 aa)) enclose the Helicase ATP-binding domain. 4 residues coordinate ATP: isoleucine 26, glutamine 31, lysine 60, and threonine 61. Residues 115 to 216 (RGRYVCPRNL…FFVARREIQE (102 aa)) are [4Fe-4S] domain. Cysteine 120, cysteine 194, cysteine 199, and cysteine 205 together coordinate [4Fe-4S] cluster. The segment at 217–261 (AEVVVANHALVMAAMESEAVLPDPKNLLLVLDEGHHLPDVARDAL) is HD1 domain middle. The short motif at 248–251 (DEGH) is the DEAH box element. An arch domain region spans residues 262–438 (EMSAEITAPW…LHLWFHCVGI (177 aa)). An HD1 domain middle region spans residues 439-491 (RVSDQLERLLWRSIPHIIVTSATLRSLNSFSRLQEMSGLKEKAGDRFVALDSP). The HD2 domain stretch occupies residues 492–716 (FNHCEQGKIV…KTKSPRRRRR (225 aa)). Residues aspartate 599, arginine 656, and arginine 659 each contribute to the ATP site.

This sequence belongs to the helicase family. DinG subfamily. Type 1 sub-subfamily. In terms of assembly, monomer in solution. The cofactor is [4Fe-4S] cluster. Requires Mg(2+) as cofactor.

It catalyses the reaction Couples ATP hydrolysis with the unwinding of duplex DNA at the replication fork by translocating in the 5'-3' direction. This creates two antiparallel DNA single strands (ssDNA). The leading ssDNA polymer is the template for DNA polymerase III holoenzyme which synthesizes a continuous strand.. The enzyme catalyses ATP + H2O = ADP + phosphate + H(+). ATPase activity is 15-fold stimulated by single-stranded DNA (ssDNA). Reduction of the [4Fe-4S] cluster reversibly switches off helicase activity. Remains fully active after exposure to 100-fold excess of hydrogen peroxide, but the [4Fe-4S] cluster can be efficiently modified by nitric oxide (NO), forming the DinG-bound dinitrosyl iron complex with the concomitant inactivation of helicase activity. Helicase activity on G-quadruplex DNA is inhibited by porphyrin derivatives meso-tetra (N-methyl-4-pyridyl) porphine tetra tosylate (T4) and N-methyl mesoporphyrin IX (NMM). Helicase activity on forked duplexes is not inhibited by T4 or NMM. G-quadruplex ligands such as Pyridostatin, PhenDC3, BRACO-19 and Netropsin can alter recognition and unwinding of G-quadruplex DNAs; the effect is both ligand- and G-quadruplex DNA-specific. In terms of biological role, DNA-dependent ATPase and 5'-3' DNA helicase. Can also unwind DNA:RNA hybrid duplexes. Is active on D-loops, R-loops, and on forked structures. Unwinds G-quadruplex DNA in a 5'-3' direction; unwinding efficiency differs on different substrates. Does not appear to unwind replication forks or Holliday junctions. Translocates on single-stranded (ss)DNA with a 5'-3' polarity. In vitro at high concentrations also unwinds in a 3'-5' direction. May be involved in recombinational DNA repair and the resumption of replication after DNA damage. The [4Fe-4S] cluster is redox active at cellular potentials and is involved in DNA-mediated charge-transport signaling between DNA repair proteins from distinct pathways. DinG cooperates at long-range with endonuclease III, a base excision repair enzyme, using DNA charge transport to redistribute to regions of DNA damage. Binds 10-11 nucleotides of ssDNA in a positively-charged groove across the helicase domains. This is ATP-dependent DNA helicase DinG from Escherichia coli (strain K12).